The sequence spans 89 residues: Small ribosomal subunit protein uS14 (89 aa).

The protein belongs to the universal ribosomal protein uS14 family. In terms of assembly, part of the 30S ribosomal subunit. Contacts proteins S3 and S10.

Its function is as follows. Binds 16S rRNA, required for the assembly of 30S particles and may also be responsible for determining the conformation of the 16S rRNA at the A site. This chain is Small ribosomal subunit protein uS14, found in Chlorobium limicola (strain DSM 245 / NBRC 103803 / 6330).